Here is a 320-residue protein sequence, read N- to C-terminus: Protein PR73 (320 aa).

At 1-44 (MPRLQQKWLNSRECPTLRGEAAKGLFPTKDDPSAHKRMSPSDKD) the chain is on the cytoplasmic side. A helical transmembrane segment spans residues 45–65 (ILILCCKLGIALLCLGLLGEV). Residues 66–319 (AVRARRALTL…SAKTYGMSYY (254 aa)) are Extracellular-facing. Asparagine 79, asparagine 89, asparagine 93, asparagine 131, and asparagine 146 each carry an N-linked (GlcNAc...) asparagine; by host glycan.

This sequence belongs to the mouse mammary tumor virus PR73 superantigen family.

The protein resides in the membrane. In terms of biological role, superantigen. The polypeptide is Protein PR73 (Mouse mammary tumor virus (strain BR6) (MMTV)).